The chain runs to 364 residues: MKALILVGGFGTRLRPLTLSLPKPLVDFANKPMILHQIEALKAIGVDEVVLAINYEPEQLLVMSKFSNDVEATLGIKITCSQETEPLGTAGPLALARDKLVDGSGQPFFVLNSDVISDYPLEEMIAFHNAHGGEASIMVTKVDEPSKYGVVVMEEATGRVERFVEKPKLFVGNKINAGIYLLNPSVLDRIELRPTSIEKEIFPQIAEAEKLYAMLLPGFWMDIGQPRDYITGLRLYLDSLRKKSPSKLATGPHILGNVLVDETAEIGEGCLIGPNVAIGPGCVVESGVRLSHCTVMRGVHVKRYACISSSIIGWHSTVGQWARVENMSILGKNVYVCDEIYCNGGVVLHNKEIKSDILKPDIVM.

Residues Leu-6 and Val-7 each contribute to the GDP-alpha-D-mannose site. Gly-9, Gly-11, Thr-12, Arg-13, and Lys-23 together coordinate diphosphate. Residues Gly-88, Asn-112, Asp-114, Gly-149, and Asn-176 each coordinate GDP-alpha-D-mannose.

Belongs to the transferase hexapeptide repeat family.

The enzyme catalyses alpha-D-mannose 1-phosphate + GTP + H(+) = GDP-alpha-D-mannose + diphosphate. The protein operates within nucleotide-sugar biosynthesis; GDP-alpha-D-mannose biosynthesis; GDP-alpha-D-mannose from alpha-D-mannose 1-phosphate (GTP route): step 1/1. Catalyzes a reaction of the Smirnoff-Wheeler pathway, the major route to ascorbate biosynthesis in plants. The chain is Probable mannose-1-phosphate guanylyltransferase 2 from Arabidopsis thaliana (Mouse-ear cress).